The primary structure comprises 398 residues: Exodeoxyribonuclease 7 large subunit (398 aa).

The protein belongs to the XseA family. Heterooligomer composed of large and small subunits.

It is found in the cytoplasm. The catalysed reaction is Exonucleolytic cleavage in either 5'- to 3'- or 3'- to 5'-direction to yield nucleoside 5'-phosphates.. Its function is as follows. Bidirectionally degrades single-stranded DNA into large acid-insoluble oligonucleotides, which are then degraded further into small acid-soluble oligonucleotides. The chain is Exodeoxyribonuclease 7 large subunit from Anaplasma phagocytophilum (strain HZ).